Reading from the N-terminus, the 63-residue chain is Rubredoxin-2 (63 aa).

The Rubredoxin-like domain occupies 8-59 (YKLFRCLQCGFEYDEAIGWPDDGIEPGTRWDEIPEDWSCPDCGAAKVDFEMV). Residues cysteine 13, cysteine 16, cysteine 46, and cysteine 49 each contribute to the Fe cation site.

It belongs to the rubredoxin family. Fe(3+) serves as cofactor.

Its function is as follows. Involved in the hydrocarbon hydroxylating system, which transfers electrons from NADH to rubredoxin reductase and then through rubredoxin to alkane 1 monooxygenase. In Rhodococcus erythropolis (Arthrobacter picolinophilus), this protein is Rubredoxin-2 (rubA2).